Reading from the N-terminus, the 166-residue chain is Phospholipase A2 inhibitor A4/A5 (166 aa).

The N-terminal stretch at 1 to 19 (MRLILLSGLLLLGTFLVNG) is a signal peptide. One can recognise a C-type lectin domain in the interval 46–161 (LFHAFLTVHK…CDDNLLVVCE (116 aa)). 2 disulfides stabilise this stretch: Cys-83–Cys-160 and Cys-138–Cys-152. N-linked (GlcNAc...) asparagine glycosylation occurs at Asn-122.

This sequence belongs to the alpha-type phospholipase A2 inhibitor family. As to quaternary structure, homotrimer; non-covalently linked. In terms of tissue distribution, expressed by the liver.

Its subcellular location is the secreted. In terms of biological role, this phospholipase A2 inhibitor binds directly phospholipase A2 in the presence or absence of calcium. The sequence is that of Phospholipase A2 inhibitor A4/A5 from Crotalus durissus terrificus (South American rattlesnake).